A 615-amino-acid polypeptide reads, in one-letter code: Isocitrate dehydrogenase kinase/phosphatase (615 aa).

ATP contacts are provided by residues 328 to 334 (APGIRGL) and Lys349. The active site involves Asp384. A disordered region spans residues 595–615 (AEPPATPPVKQPDAGPARRVA).

The protein belongs to the AceK family.

Its subcellular location is the cytoplasm. It catalyses the reaction L-seryl-[isocitrate dehydrogenase] + ATP = O-phospho-L-seryl-[isocitrate dehydrogenase] + ADP + H(+). In terms of biological role, bifunctional enzyme which can phosphorylate or dephosphorylate isocitrate dehydrogenase (IDH) on a specific serine residue. This is a regulatory mechanism which enables bacteria to bypass the Krebs cycle via the glyoxylate shunt in response to the source of carbon. When bacteria are grown on glucose, IDH is fully active and unphosphorylated, but when grown on acetate or ethanol, the activity of IDH declines drastically concomitant with its phosphorylation. In Cupriavidus taiwanensis (strain DSM 17343 / BCRC 17206 / CCUG 44338 / CIP 107171 / LMG 19424 / R1) (Ralstonia taiwanensis (strain LMG 19424)), this protein is Isocitrate dehydrogenase kinase/phosphatase.